The primary structure comprises 237 residues: Phosphoribosylaminoimidazole-succinocarboxamide synthase (237 aa).

The protein belongs to the SAICAR synthetase family.

It carries out the reaction 5-amino-1-(5-phospho-D-ribosyl)imidazole-4-carboxylate + L-aspartate + ATP = (2S)-2-[5-amino-1-(5-phospho-beta-D-ribosyl)imidazole-4-carboxamido]succinate + ADP + phosphate + 2 H(+). It functions in the pathway purine metabolism; IMP biosynthesis via de novo pathway; 5-amino-1-(5-phospho-D-ribosyl)imidazole-4-carboxamide from 5-amino-1-(5-phospho-D-ribosyl)imidazole-4-carboxylate: step 1/2. The chain is Phosphoribosylaminoimidazole-succinocarboxamide synthase from Yersinia enterocolitica serotype O:8 / biotype 1B (strain NCTC 13174 / 8081).